We begin with the raw amino-acid sequence, 207 residues long: Large ribosomal subunit protein uL4 (207 aa).

The disordered stretch occupies residues 47–78 (GTHKVKNRSEVRGGGRKPWRQKGTGRARQGSI). Positions 60-71 (GGRKPWRQKGTG) are enriched in basic residues.

This sequence belongs to the universal ribosomal protein uL4 family. Part of the 50S ribosomal subunit.

In terms of biological role, one of the primary rRNA binding proteins, this protein initially binds near the 5'-end of the 23S rRNA. It is important during the early stages of 50S assembly. It makes multiple contacts with different domains of the 23S rRNA in the assembled 50S subunit and ribosome. Functionally, forms part of the polypeptide exit tunnel. The polypeptide is Large ribosomal subunit protein uL4 (Listeria innocua serovar 6a (strain ATCC BAA-680 / CLIP 11262)).